The following is a 1113-amino-acid chain: Poly(A) RNA polymerase gld-2 (1113 aa).

Disordered regions lie at residues 1–113 (MVMA…PKYH), 134–175 (RPIF…PTQP), 205–266 (LYRS…GQDP), and 445–513 (LDDE…DEST). Residues 22 to 52 (SPSVDSVSRVQQQSGGFAFYNQQSNHQYQQS) are compositionally biased toward low complexity. The span at 60–106 (SRDGNTGYYNNHSGNKRQTYNNQRGGRSYNHRGNSNYQQNGEYSGNQ) shows a compositional bias: polar residues. Over residues 149–172 (RRSSPPSPSALSSSTANSTSNRAP) the composition is skewed to low complexity. The segment covering 223-233 (YKQPPPQPPST) has biased composition (pro residues). The segment covering 451 to 485 (GADHDKTIDENRRRIHKSQEPRIGTEEKALNELPR) has biased composition (basic and acidic residues). The segment covering 492-507 (SSCSSISSVSESSSPS) has biased composition (low complexity). Mg(2+)-binding residues include aspartate 606 and aspartate 608. The PAP-associated domain maps to 780–816 (TLGELLIGFLDYYANEFNYDRDAISIRQGRRVERAAL). 2 disordered regions span residues 817–854 (AVRPKIHSNSEGDKETPPPSSSASTSSIHNGGTPGIPM) and 966–1113 (GPGH…NVSQ). The segment covering 972-994 (YQQQSNQNLSRPQRPGSNQGYQM) has biased composition (polar residues). 2 stretches are compositionally biased toward low complexity: residues 995–1035 (NNNR…SRSN) and 1044–1061 (QQNSQKGSSGVSVSKENV). Basic and acidic residues predominate over residues 1069-1084 (VDKKQQNSNRKDDGNR).

Belongs to the DNA polymerase type-B-like family. GLD2 subfamily. As to quaternary structure, interacts with gld-3. The cofactor is Mg(2+). Mn(2+) is required as a cofactor. As to expression, germline-specific.

It is found in the cytoplasm. It carries out the reaction RNA(n) + ATP = RNA(n)-3'-adenine ribonucleotide + diphosphate. In terms of biological role, cytoplasmic poly(A) RNA polymerase that adds successive AMP monomers to the 3'-end of specific RNAs, forming a poly(A) tail. Acts as a regulator of mitosis/meiosis required for progression through meiotic prophase during oogenesis and spermatogenesis and for promotion of the entry into meiosis from the mitotic cell cycle. May act by regulating and activating gld-1 mRNA activity in germline. Required for polyadenylation of neg-1 mRNA during embryogenesis. The protein is Poly(A) RNA polymerase gld-2 (gld-2) of Caenorhabditis elegans.